The sequence spans 236 residues: Exotoxin type H (236 aa).

The N-terminal stretch at 1–32 (MRYNCRYSHIDKKIYSMIICLSFLLYSNVVQA) is a signal peptide.

It belongs to the staphylococcal/streptococcal toxin family.

The protein resides in the secreted. Functionally, mitogenic for human peripheral blood lymphocytes. The chain is Exotoxin type H (speH) from Streptococcus pyogenes serotype M1.